The sequence spans 296 residues: Probable DNA-directed RNA polymerase III subunit RPC6 (296 aa).

Belongs to the eukaryotic RPC34/RPC39 RNA polymerase subunit family.

It localises to the nucleus. Functionally, DNA-dependent RNA polymerase catalyzes the transcription of DNA into RNA using the four ribonucleoside triphosphates as substrates. Specific peripheric component of RNA polymerase III which synthesizes small RNAs, such as 5S rRNA and tRNAs. In Caenorhabditis elegans, this protein is Probable DNA-directed RNA polymerase III subunit RPC6.